Consider the following 206-residue polypeptide: Large ribosomal subunit protein uL4 (206 aa).

This sequence belongs to the universal ribosomal protein uL4 family. In terms of assembly, part of the 50S ribosomal subunit.

Functionally, one of the primary rRNA binding proteins, this protein initially binds near the 5'-end of the 23S rRNA. It is important during the early stages of 50S assembly. It makes multiple contacts with different domains of the 23S rRNA in the assembled 50S subunit and ribosome. In terms of biological role, forms part of the polypeptide exit tunnel. In Bradyrhizobium sp. (strain BTAi1 / ATCC BAA-1182), this protein is Large ribosomal subunit protein uL4.